The primary structure comprises 310 residues: Upstream stimulatory factor 1 (310 aa).

Residues 1-17 (MKGQQKTAETEEGTVQI) are compositionally biased toward polar residues. 2 disordered regions span residues 1 to 26 (MKGQ…ATGE) and 171 to 209 (QGGS…EVER). Positions 190–209 (EAPRTTRDEKRRAQHNEVER) are enriched in basic and acidic residues. The bHLH domain occupies 199–254 (KRRAQHNEVERRRRDKINNWIVQLSKIIPDCSMESTKSGQSKGGILSKACDYIQEL). Residues 271-292 (LQLDNDVLRQQVEDLKNKNLLL) form a leucine-zipper region. Lys-306 participates in a covalent cross-link: Glycyl lysine isopeptide (Lys-Gly) (interchain with G-Cter in SUMO2).

In terms of assembly, efficient DNA binding requires dimerization with another bHLH protein. Binds DNA as a homodimer or a heterodimer (USF1/USF2). Interacts with varicella-zoster virus IE62 protein.

The protein resides in the nucleus. In terms of biological role, transcription factor that binds to a symmetrical DNA sequence (E-boxes) (5'-CACGTG-3') that is found in a variety of viral and cellular promoters. This chain is Upstream stimulatory factor 1 (USF1), found in Homo sapiens (Human).